A 504-amino-acid polypeptide reads, in one-letter code: GTPase Der (504 aa).

In terms of domain architecture, EngA-type G 1 spans 3-166; that stretch reads PVVALVGRPN…QVLAPLAEKL (164 aa). Residues 9–16, 56–60, and 118–121 each bind GTP; these read GRPNVGKS, DTGGI, and NKTD. Residues 171–190 form a disordered region; that stretch reads VDSDENVADDEQDEWDSDFD. Residues 172–190 show a composition bias toward acidic residues; it reads DSDENVADDEQDEWDSDFD. Residues 216-389 form the EngA-type G 2 domain; that stretch reads IKIAIVGRPN…SIQEAYQCAT (174 aa). GTP contacts are provided by residues 222–229, 269–273, and 334–337; these read GRPNVGKS, DTAGV, and NKWD. Positions 390 to 474 constitute a KH-like domain; sequence KKMTTSMLTR…PIRVLFQEGN (85 aa).

It belongs to the TRAFAC class TrmE-Era-EngA-EngB-Septin-like GTPase superfamily. EngA (Der) GTPase family. In terms of assembly, associates with the 50S ribosomal subunit.

Its function is as follows. GTPase that plays an essential role in the late steps of ribosome biogenesis. The polypeptide is GTPase Der (Glaesserella parasuis serovar 5 (strain SH0165) (Haemophilus parasuis)).